The primary structure comprises 281 residues: MQKILQTDDITDNQVLRKRKRKRTETANSENANSALEKAQRDPYSGNAFLPGESSSDEETPLMELSKEELCNKIESLKEKLRSIRKENSRLRQSLVMLQVLPQAVTQFEELVGMAETLLKSGGAVSTPASTLWRATNNSSPDSFASLCSNSNSTSSSPSSVKAEEEQHPGEKQFTIERWQIARCNKSKPQKFINDLMQVLYTNEYMATHSLTGAKSSTSRDKVVKPAMNQNEVQEIIGVTKQVFPSADDVSIRRMIGQKLNNCTKKPNASKAPNSQDGILK.

Disordered stretches follow at residues 15–62 (VLRK…ETPL) and 143–172 (SFAS…PGEK). Residues 19 to 99 (RKRKRTETAN…RLRQSLVMLQ (81 aa)) are a coiled coil. Positions 143–160 (SFASLCSNSNSTSSSPSS) are enriched in low complexity. Residues 162–172 (KAEEEQHPGEK) are compositionally biased toward basic and acidic residues. The region spanning 171–271 (EKQFTIERWQ…NCTKKPNASK (101 aa)) is the BEN domain.

In terms of assembly, interacts (via BEN domain) with RBPJ.

It localises to the nucleus. Acts as a corepressor of recombining binding protein suppressor hairless (RBPJ) and inhibits Notch signaling in neural stem cells, thereby opposing their self-renewal and promoting neurogenesis. This Mus musculus (Mouse) protein is BEN domain-containing protein 6 (Bend6).